The sequence spans 600 residues: Rhesus-like glycoprotein B (600 aa).

The Cytoplasmic portion of the chain corresponds to 1-16 (MSKDEHKLPLSKRKES). The helical transmembrane segment at 17–37 (IIFMMILFAFQVFMVVLFSVW) threads the bilayer. Topologically, residues 38 to 73 (VRYSKNEVNYSTLTPEQLQELEATGGVVQEEVTNIY) are extracellular. A glycan (N-linked (GlcNAc...) asparagine) is linked at Asn-46. Residues 74–94 (GYFRDINIMIFFGFGFLMTFL) form a helical membrane-spanning segment. Over 95-102 (RRYGYSAL) the chain is Cytoplasmic. A helical transmembrane segment spans residues 103–123 (GYTFIISALVAQWSVLIYGFF). Topologically, residues 124 to 145 (ETVDHKNDHGGDYASTFEMSQT) are extracellular. A helical transmembrane segment spans residues 146 to 166 (VLLQGLFCAGAVMISYGAVLG). Residues 167–170 (RVTP) lie on the Cytoplasmic side of the membrane. The chain crosses the membrane as a helical span at residues 171–191 (LQMLVVGIFEPIFYFLNMFIG). Over 192–199 (EMNLEAID) the chain is Extracellular. Residues 200–220 (VGGGMYIHLFGSVFGLTIAWF) traverse the membrane as a helical segment. The Cytoplasmic portion of the chain corresponds to 221 to 240 (LTDKKSKDCEDNSPSYTGDY). The helical transmembrane segment at 241-261 (FAMAGTLFLWMMWPSFNAAIA) threads the bilayer. Residues 262–274 (PLGEPQFRAIANT) lie on the Extracellular side of the membrane. Residues 275 to 295 (FLSLTASTIATFIVTRLFGHL) form a helical membrane-spanning segment. Topologically, residues 296–303 (GHKIDMVH) are cytoplasmic. Residues 304–323 (VQNSSLAGGVVQGCLAHMNI) form a helical membrane-spanning segment. At 324 to 325 (NP) the chain is on the extracellular side. A helical membrane pass occupies residues 326-346 (GGAIGMGFLAGVISVIGYLFI). The Cytoplasmic portion of the chain corresponds to 347-361 (SPFLQRRFNIQDTCG). A helical membrane pass occupies residues 362 to 382 (IHNLHFMPGFIGSIAACIAAW). Residues 383-411 (KGLNDRSLYNPIEFNQIFRAGEDQARNNA) lie on the Extracellular side of the membrane. Residues 412–432 (AATFISIGIAIAGGLFVGMIL) form a helical membrane-spanning segment. At 433-600 (KALKKVGGLK…SSTNSPTSKV (168 aa)) the chain is on the cytoplasmic side. Positions 471 to 600 (NLPMPTTDNG…SSTNSPTSKV (130 aa)) are disordered. The segment covering 498-510 (NKKENGYRRDLIR) has biased composition (basic and acidic residues). Residues 519–529 (EQSTDSSYSDS) are compositionally biased toward low complexity. Residues 540-554 (RIRKLAKKSYRRSKK) are compositionally biased toward basic residues. Basic and acidic residues predominate over residues 555 to 566 (SHSEHQPQHQPE). Residues 571–580 (NNNNNNNNNN) are compositionally biased toward low complexity. The span at 581–600 (ATAETTDNGGSSTNSPTSKV) shows a compositional bias: polar residues.

Belongs to the ammonium transporter (TC 2.A.49) family. Rh subfamily.

Its subcellular location is the membrane. Functionally, may be a carbon dioxide/bicarbonate transporter. This is Rhesus-like glycoprotein B (rhgB) from Dictyostelium discoideum (Social amoeba).